A 614-amino-acid polypeptide reads, in one-letter code: Zinc metalloproteinase-disintegrin-like VLAIP-B (614 aa).

The first 20 residues, Met1 to Ser20, serve as a signal peptide directing secretion. A propeptide spanning residues Ile21–Glu193 is cleaved from the precursor. Gln194 carries the pyrrolidone carboxylic acid modification. The Peptidase M12B domain maps to Lys202–Pro398. A Ca(2+)-binding site is contributed by Glu205. A glycan (N-linked (GlcNAc...) asparagine) is linked at Asn262. Residue Asp289 participates in Ca(2+) binding. Intrachain disulfides connect Cys313–Cys393, Cys353–Cys377, and Cys355–Cys360. His338 contributes to the Zn(2+) binding site. Glu339 is an active-site residue. His342 and His348 together coordinate Zn(2+). Residues Cys393, Asn396, Val408, Asn411, Phe413, Glu415, Glu418, and Asp421 each contribute to the Ca(2+) site. Residues Pro406 to Asn492 enclose the Disintegrin domain. Cystine bridges form between Cys409–Cys438, Cys420–Cys433, Cys422–Cys428, Cys432–Cys455, Cys446–Cys452, Cys451–Cys477, Cys464–Cys484, Cys471–Cys503, Cys496–Cys508, Cys515–Cys565, Cys530–Cys576, Cys543–Cys553, Cys560–Cys602, and Cys596–Cys607. Positions Glu470–Asp472 match the D/ECD-tripeptide motif. 3 N-linked (GlcNAc...) asparagine glycosylation sites follow: Asn505, Asn547, and Asn568.

The protein belongs to the venom metalloproteinase (M12B) family. P-III subfamily. P-IIIc sub-subfamily. As to quaternary structure, heterodimer; disulfide-linked. The cofactor is Zn(2+). In terms of processing, the N-terminus is blocked. Expressed by the venom gland.

The protein localises to the secreted. Its activity is regulated as follows. Inhibited by EDTA or 1,10-phenanthroline. Not inhibited by PMSF. Functionally, this metalloproteinase hydrolyzes azocasein, and insulin B-chain (at the '38-Ala-|-Leu-39' bond). Also hydrolyzes the Aalpha-chain (FGA) and more slowly the Bbeta-chain of fibrinogen (FGB), without affecting the gamma-chain. Cleaves alpha-chain of fibrinogen at '432-Lys-|-Leu-433' and '535-Pro-|-Met-536' bonds. Does not cleave fibrin. Inhibits endothelial cell adhesion to extracellular matrix proteins such as fibrinogen, fibronectin, vitronectin, collagen I, and collagen IV. Induces apoptosis in vascular endothelial cells. The chain is Zinc metalloproteinase-disintegrin-like VLAIP-B from Macrovipera lebetinus (Levantine viper).